The following is a 248-amino-acid chain: Regulator of G-protein signaling 7-binding protein A (248 aa).

Positions Met-1 to Arg-32 are disordered. 2 S-palmitoyl cysteine lipidation sites follow: Cys-243 and Cys-244.

Belongs to the RGS7BP/RGS9BP family. Palmitoylated. Undergoes rapid palmitoylation turnover. Palmitoylation regulates the cell membrane and nuclear shuttling and the regulation of GPCR signaling. Upon depalmitoylation, it is targeted from the plasma membrane into the nucleus. GPCR signaling inhibits depalmitoylation and promotes localization to the plasma membrane.

Its subcellular location is the nucleus. It localises to the cytoplasm. It is found in the cell membrane. Its function is as follows. Regulator of G protein-coupled receptor (GPCR) signaling. Regulatory subunit of the R7-Gbeta5 complexes that acts by controlling the subcellular location of the R7-Gbeta5 complexes. When palmitoylated, it targets the R7-Gbeta5 complexes to the plasma membrane, leading to inhibit G protein alpha subunits. When it is unpalmitoylated, the R7-Gbeta5 complexes undergo a nuclear/cytoplasmic shuttling. This Danio rerio (Zebrafish) protein is Regulator of G-protein signaling 7-binding protein A (rgs7bpa).